Here is a 346-residue protein sequence, read N- to C-terminus: PhoH-like protein (346 aa).

142 to 149 (GPAGTGKT) is a binding site for ATP.

This sequence belongs to the PhoH family.

It is found in the cytoplasm. This Escherichia coli O157:H7 protein is PhoH-like protein (ybeZ).